A 180-amino-acid chain; its full sequence is Acireductone dioxygenase (180 aa).

Fe(2+) contacts are provided by H99, H101, E105, and H145. Residues H99, H101, E105, and H145 each contribute to the Ni(2+) site.

It belongs to the acireductone dioxygenase (ARD) family. As to quaternary structure, monomer. It depends on Fe(2+) as a cofactor. Ni(2+) is required as a cofactor.

The catalysed reaction is 1,2-dihydroxy-5-(methylsulfanyl)pent-1-en-3-one + O2 = 3-(methylsulfanyl)propanoate + CO + formate + 2 H(+). It catalyses the reaction 1,2-dihydroxy-5-(methylsulfanyl)pent-1-en-3-one + O2 = 4-methylsulfanyl-2-oxobutanoate + formate + 2 H(+). Its pathway is amino-acid biosynthesis; L-methionine biosynthesis via salvage pathway; L-methionine from S-methyl-5-thio-alpha-D-ribose 1-phosphate: step 5/6. Catalyzes 2 different reactions between oxygen and the acireductone 1,2-dihydroxy-3-keto-5-methylthiopentene (DHK-MTPene) depending upon the metal bound in the active site. Fe-containing acireductone dioxygenase (Fe-ARD) produces formate and 2-keto-4-methylthiobutyrate (KMTB), the alpha-ketoacid precursor of methionine in the methionine recycle pathway. Ni-containing acireductone dioxygenase (Ni-ARD) produces methylthiopropionate, carbon monoxide and formate, and does not lie on the methionine recycle pathway. This Geobacillus thermodenitrificans (strain NG80-2) protein is Acireductone dioxygenase.